The primary structure comprises 369 residues: Forkhead box protein I2-A (369 aa).

The fork-head DNA-binding region spans 124–218; sequence RPPYSYSSLI…DNGNFRRKRK (95 aa). A disordered region spans residues 215–252; the sequence is RKRKRKSESVGAGFDEDSNEDKKPLALKSLGSDSPQGA.

Localized to the animal hemisphere of early cleavage stage embryos. Zygotic expression is restricted to the dorsal part of the epibranchial placodes of the head within a region located near the tip of the first, second and third visceral pouch.

The protein localises to the nucleus. In terms of biological role, possible transcriptional activator. This Xenopus laevis (African clawed frog) protein is Forkhead box protein I2-A (foxi2-a).